We begin with the raw amino-acid sequence, 267 residues long: MLDFVGLGLFDEKDISLKGLEKIHNADKVYVEFYTSILMGTDLEKMEMLYKKKITVLSREDVEQHAEDWLVDAKDSNVVFLTGGDTMVSTTHVDLRLRAADMGIKTTLIHGASIASAICGLSGLQNYRFGKSVTIPHPYVSNRGVRVVSQTPYDTIKNNIEAGLHTAVFLDIDKDKGYMTVNQAMEILLEVEGKLGEGVMVDRLAVGIARAGSPSPVVKADYIEALRDYYLGGPLHIVVIPAELHFVEAEALVKLAGAPEGILENID.

Residues Leu-9, Asp-85, Val-88, 113 to 114, Leu-170, Ala-211, and His-236 contribute to the S-adenosyl-L-methionine site; that span reads SI.

Belongs to the diphthine synthase family. As to quaternary structure, homodimer.

It carries out the reaction 2-[(3S)-amino-3-carboxypropyl]-L-histidyl-[translation elongation factor 2] + 3 S-adenosyl-L-methionine = diphthine-[translation elongation factor 2] + 3 S-adenosyl-L-homocysteine + 3 H(+). It participates in protein modification; peptidyl-diphthamide biosynthesis. Functionally, S-adenosyl-L-methionine-dependent methyltransferase that catalyzes the trimethylation of the amino group of the modified target histidine residue in translation elongation factor 2 (EF-2), to form an intermediate called diphthine. The three successive methylation reactions represent the second step of diphthamide biosynthesis. This chain is Diphthine synthase, found in Methanococcoides burtonii (strain DSM 6242 / NBRC 107633 / OCM 468 / ACE-M).